A 312-amino-acid chain; its full sequence is Putative endo-1,4-beta-xylanase (312 aa).

In terms of domain architecture, GH10 spans 1-301; that stretch reads MKQQYLLDYE…KPCFYSFLQA (301 aa). Glu104 (proton donor) is an active-site residue. Glu216 (nucleophile) is an active-site residue.

The protein belongs to the glycosyl hydrolase 10 (cellulase F) family.

It carries out the reaction Endohydrolysis of (1-&gt;4)-beta-D-xylosidic linkages in xylans.. Its pathway is glycan degradation; xylan degradation. Could be a xylanase. The sequence is that of Putative endo-1,4-beta-xylanase from Caldicellulosiruptor saccharolyticus (Caldocellum saccharolyticum).